A 137-amino-acid chain; its full sequence is Peptide methionine sulfoxide reductase MsrB (137 aa).

The region spanning 7 to 129 (PEELKNGLSE…NSASLSFTDE (123 aa)) is the MsrB domain. Zn(2+) contacts are provided by C46, C49, C95, and C98. The active-site Nucleophile is C118.

The protein belongs to the MsrB Met sulfoxide reductase family. Zn(2+) serves as cofactor.

The catalysed reaction is L-methionyl-[protein] + [thioredoxin]-disulfide + H2O = L-methionyl-(R)-S-oxide-[protein] + [thioredoxin]-dithiol. In Klebsiella pneumoniae subsp. pneumoniae (strain ATCC 700721 / MGH 78578), this protein is Peptide methionine sulfoxide reductase MsrB.